We begin with the raw amino-acid sequence, 432 residues long: MQVTVETLEGLERRLNITVPAANIEDAVTAELRNIAKNRRFDGFRKGKVPMKMVAKMYGKAVRQDVMGEVMQRHFIEAIVKEKINPAGAPTFAPVENNEGADLVFNATFEVYPEVELKGLENITVEKPAVEVKEADVEEMIETLRKQQATWTEVEAAADAGSRATIDFVGSIDGEEFEGGKAENFPLEMGAGRMIPGFEDGIVGKTAGMEFEIEVNFPEDYHAENLKGKAAKFSIKLNKVEARELPELNEEFVSKFGAAEGVEGLKAEVRKNMERELKQAVKNRIKEQAIDGLVNENNIDVPSALIDQEIGVLRQQAAQRFGGNTEAADQLPRELFEEQAKRRVVVGLLLGEVIKTEELKADDEKVKAIIEEMATAYEDPTEVIAYYEQNEQMMNNMRNVALEEQAIDAIIAKAQVSDKEVSFNELMNQQPA.

The PPIase FKBP-type domain occupies 161–246 (GSRATIDFVG…LNKVEARELP (86 aa)).

This sequence belongs to the FKBP-type PPIase family. Tig subfamily.

It is found in the cytoplasm. It catalyses the reaction [protein]-peptidylproline (omega=180) = [protein]-peptidylproline (omega=0). Involved in protein export. Acts as a chaperone by maintaining the newly synthesized protein in an open conformation. Functions as a peptidyl-prolyl cis-trans isomerase. The polypeptide is Trigger factor (Vibrio atlanticus (strain LGP32) (Vibrio splendidus (strain Mel32))).